We begin with the raw amino-acid sequence, 66 residues long: Sarcoplasmic/endoplasmic reticulum calcium ATPase regulator ARLN (66 aa).

At M1 the chain carries N-acetylmethionine. The tract at residues 1 to 37 (MEVDAPGVDGRDGLRERRGFSEGGRQNFDVRPQSGAN) is disordered. Over residues 9–20 (DGRDGLRERRGF) the composition is skewed to basic and acidic residues. A helical transmembrane segment spans residues 45-65 (WLDLWLFILFDVVVFLFVYFL).

In terms of assembly, homooligomer. Can also form heterooligomers with other sarcoplasmic/endoplasmic reticulum calcium ATPase (SERCA) regulators ERLN, PLN, SLN and STRIT1/DWORF. Monomer. Interacts as a monomer with ATP2A2/SERCA2; the interaction results in inhibition of ATP2A2 Ca(2+) affinity.

Its subcellular location is the endoplasmic reticulum membrane. Its function is as follows. Inhibits the activity of the calcium ATPases ATP2A2/SERCA2 and ATP2A3/SERCA3 by decreasing their apparent affinity for Ca(2+). The protein is Sarcoplasmic/endoplasmic reticulum calcium ATPase regulator ARLN of Homo sapiens (Human).